A 447-amino-acid chain; its full sequence is Probable glycine dehydrogenase (decarboxylating) subunit 1 (447 aa).

It belongs to the GcvP family. N-terminal subunit subfamily. The glycine cleavage system is composed of four proteins: P, T, L and H. In this organism, the P 'protein' is a heterodimer of two subunits.

The enzyme catalyses N(6)-[(R)-lipoyl]-L-lysyl-[glycine-cleavage complex H protein] + glycine + H(+) = N(6)-[(R)-S(8)-aminomethyldihydrolipoyl]-L-lysyl-[glycine-cleavage complex H protein] + CO2. Its function is as follows. The glycine cleavage system catalyzes the degradation of glycine. The P protein binds the alpha-amino group of glycine through its pyridoxal phosphate cofactor; CO(2) is released and the remaining methylamine moiety is then transferred to the lipoamide cofactor of the H protein. The chain is Probable glycine dehydrogenase (decarboxylating) subunit 1 from Maricaulis maris (strain MCS10) (Caulobacter maris).